The sequence spans 200 residues: Large ribosomal subunit protein uL4 (200 aa).

Residues 38 to 67 (GRQGSKAQKTRSEVSGGGKKPWRQKGTGRA) are disordered.

The protein belongs to the universal ribosomal protein uL4 family. In terms of assembly, part of the 50S ribosomal subunit.

One of the primary rRNA binding proteins, this protein initially binds near the 5'-end of the 23S rRNA. It is important during the early stages of 50S assembly. It makes multiple contacts with different domains of the 23S rRNA in the assembled 50S subunit and ribosome. In terms of biological role, forms part of the polypeptide exit tunnel. The chain is Large ribosomal subunit protein uL4 from Pseudomonas paraeruginosa (strain DSM 24068 / PA7) (Pseudomonas aeruginosa (strain PA7)).